A 211-amino-acid polypeptide reads, in one-letter code: Ethylene-responsive transcription factor LEP (211 aa).

Disordered regions lie at residues 1–21 and 74–110; these read MNTTSSKSKKKQDDQVGTRFL and NFVYSDMPPSSSVTSIVSPDDPPPPPPPPAPPSNDPV. A DNA-binding region (AP2/ERF) is located at residues 19 to 76; the sequence is RFLGVRRRPWGRYAAEIRDPTTKERHWLGTFDTAEEAALAYDRAARSMRGTRARTNFV. The span at 81–92 shows a compositional bias: low complexity; sequence PPSSSVTSIVSP. Pro residues predominate over residues 93 to 107; sequence DDPPPPPPPPAPPSN.

The protein belongs to the AP2/ERF transcription factor family. ERF subfamily. Expressed in germinating seeds. Present in young shoots, at low levels, especially in leaf primordia and developing leaf blades. Also detected in vascular tissue, mostly in xylem, of young leaves, petioles and hypocotyls.

It localises to the nucleus. Its function is as follows. Cell division-promoting factor involved in leaf blade differentiation, inflorescence branching, as well as in carpel and silique shape. Promotes the number of xylem cells. Positively regulates the gibberellin signaling pathway leading to germination, hypocotyl elongation, and leaf expansion. Probably acts as a transcriptional activator. Binds to the GCC-box pathogenesis-related promoter element. May be involved in the regulation of gene expression by stress factors and by components of stress signal transduction pathways. In Arabidopsis thaliana (Mouse-ear cress), this protein is Ethylene-responsive transcription factor LEP (LEP).